The primary structure comprises 227 residues: Orotidine 5'-phosphate decarboxylase (227 aa).

Substrate-binding positions include D12, K34, 61-70 (DLKLHDIPNT), T117, R178, Q187, G207, and R208. K63 acts as the Proton donor in catalysis.

This sequence belongs to the OMP decarboxylase family. Type 1 subfamily. Homodimer.

The enzyme catalyses orotidine 5'-phosphate + H(+) = UMP + CO2. The protein operates within pyrimidine metabolism; UMP biosynthesis via de novo pathway; UMP from orotate: step 2/2. Functionally, catalyzes the decarboxylation of orotidine 5'-monophosphate (OMP) to uridine 5'-monophosphate (UMP). The sequence is that of Orotidine 5'-phosphate decarboxylase from Anaeromyxobacter dehalogenans (strain 2CP-1 / ATCC BAA-258).